The following is a 692-amino-acid chain: MAREFSLENTRNIGIMAHIDAGKTTATERILYYTGRIHKIGETHEGASQMDWMEQEQERGITITSAATTAQWKGHRVNIIDTPGHVDFTVEVERSLRVLDGAVAVLDAQSGVEPQTETVWRQATTYGVPRIVFVNKMDKIGADFLYSVGTIHDRLQANAHPIQLPIGAEDEFNGIIDLVEECAYMYGNDLGTDIQRVEIPEEHKELAEEYRGKLIEAVAELDEEMMMKYLEGEEITVEELKAGIRKATTSVEFFPVICGSAFKNKGVQILLDAVIDYLPSPLDVPAIKGIVPDTDEEVERKSSDEEPFAALAFKIMTDPYVGKLTFFRVYSGVLNSGSYVKNSTKGKRERVGRILQMHANSREEISTVYAGDIAAAVGLKDTTTGDTLCDEKSLVILESMEFPEPVISVAIEPKSKADQDKMGTALSKLSEEDPTFRAHTDQETGQTIIAGMGELHLDIIVDRMRREFKVEANVGAPQVAYRETFRAAAKVEGKFARQSGGRGQFGHVWIEFEPNEEGKGFEFENKIVGGVVPREYIPAVGAGLEDALKNGVLAGYPVADIKAALVDGSYHDVDSSEMAFKIAASMALKAAVSKCNPVILEPMMKVEVVIPEEYMGDIMGDVTSRRGRVEGMEARGNAQVVRAMVPLSEMFGYATSLRSNTQGRGTFSMVFDHYEEVPKSVSEEIIKKNKGE.

The tr-type G domain maps to 8 to 282; the sequence is ENTRNIGIMA…AVIDYLPSPL (275 aa). GTP contacts are provided by residues 17–24, 81–85, and 135–138; these read AHIDAGKT, DTPGH, and NKMD.

Belongs to the TRAFAC class translation factor GTPase superfamily. Classic translation factor GTPase family. EF-G/EF-2 subfamily.

It is found in the cytoplasm. Catalyzes the GTP-dependent ribosomal translocation step during translation elongation. During this step, the ribosome changes from the pre-translocational (PRE) to the post-translocational (POST) state as the newly formed A-site-bound peptidyl-tRNA and P-site-bound deacylated tRNA move to the P and E sites, respectively. Catalyzes the coordinated movement of the two tRNA molecules, the mRNA and conformational changes in the ribosome. The polypeptide is Elongation factor G (Bacillus anthracis (strain CDC 684 / NRRL 3495)).